Reading from the N-terminus, the 505-residue chain is Elsinochrome transporter 1 (505 aa).

Residues 1 to 10 (MALSGLGSGP) are compositionally biased toward gly residues. Positions 1-25 (MALSGLGSGPEGNPNNHQGKAIPTL) are disordered. The helical transmembrane segment at 35–55 (FLFSWVSFLVPFWSWYPFSPL) threads the bilayer. Residues Asn-64 and Asn-80 are each glycosylated (N-linked (GlcNAc...) asparagine). The disordered stretch occupies residues 221-295 (DTPTGAGKPP…TEKGESLPLT (75 aa)). Low complexity predominate over residues 255–267 (TPSSPDRSSSTNS). Helical transmembrane passes span 313–333 (VIFS…FGAE), 348–368 (LGLG…LNIV), 391–411 (KALL…IGLA), 417–437 (ATLV…ANGL), 449–469 (VVSG…AIVF), and 479–499 (VFWI…WIKP).

It belongs to the major facilitator superfamily. Nitrate/nitrite porter (TC 2.A.1.8) family.

The protein localises to the cell membrane. In terms of biological role, major facilitator-type transporter; part of the gene cluster that mediates the biosynthesis of elsinochromes, pigments consisting of at least four interconvertible tautomers (A, B, C and D) that have a core phenolic quinone to which various side chains are attached and which play an important role in fungal pathogenesis. Once elsinochrome is synthesized, it must be exported outside the fungal cells, which is probably accomplished by the ECT1 transporter, to avoid toxicity. The protein is Elsinochrome transporter 1 of Elsinoe fawcettii (Citrus scab fungus).